The following is a 746-amino-acid chain: Methyl-CpG-binding domain-containing protein 13 (746 aa).

Short sequence motifs (nuclear localization signal) lie at residues 13 to 20 (ERKVEIRV) and 44 to 51 (IKKLEITN). The 76-residue stretch at 29 to 104 (VIVEKSAAQG…KESDIEDDDS (76 aa)) folds into the MBD domain. Disordered regions lie at residues 131–157 (IDDVRRSKRRNLSSSDEHSKNCKMTSD), 169–283 (LGKK…PTPE), 295–328 (PLDDEPTPELKTRTKVQRVVPPDDEPTPELKTRT), 348–479 (TKVQ…LKSP), 518–562 (TAAG…SGSA), and 696–746 (EPDT…FSKD). Residues 169 to 180 (LGKKEEVKDPIE) show a composition bias toward basic and acidic residues. The span at 190 to 199 (RSQTKASTTE) shows a compositional bias: polar residues. Over residues 244 to 260 (SSEKRITRSKVEEKKNE) the composition is skewed to basic and acidic residues. Residues 256 to 263 (EKKNELSN) carry the Nuclear localization signal motif. Positions 427–451 (VAQSCNEQSSQKPHAAAATSNNRVS) are enriched in polar residues. Residues 465–476 (VGRKPSKDKKTL) show a composition bias toward basic residues. Composition is skewed to polar residues over residues 529–546 (PKANLTTSVKPTQISPLR) and 702–730 (KSQGMTSTTAATQEAKGRQNNCDYMTNKT). Residues 732-746 (GKPDDLRFTQSFSKD) show a composition bias toward basic and acidic residues.

The protein resides in the nucleus. Probable transcriptional regulator. This Arabidopsis thaliana (Mouse-ear cress) protein is Methyl-CpG-binding domain-containing protein 13 (MBD13).